A 212-amino-acid polypeptide reads, in one-letter code: Ribonuclease HII (212 aa).

Positions S28–F212 constitute an RNase H type-2 domain. D34, E35, and D127 together coordinate a divalent metal cation.

This sequence belongs to the RNase HII family. Requires Mn(2+) as cofactor. Mg(2+) is required as a cofactor.

Its subcellular location is the cytoplasm. It carries out the reaction Endonucleolytic cleavage to 5'-phosphomonoester.. Its function is as follows. Endonuclease that specifically degrades the RNA of RNA-DNA hybrids. This Chlamydia abortus (strain DSM 27085 / S26/3) (Chlamydophila abortus) protein is Ribonuclease HII.